Reading from the N-terminus, the 229-residue chain is Ribonuclease 3 (229 aa).

Residues 2 to 130 (FEKLQDVLCY…ILGAIFLDGG (129 aa)) form the RNase III domain. Glu43 is a binding site for Mg(2+). The active site involves Asp47. Mg(2+)-binding residues include Asp116 and Glu119. Residue Glu119 is part of the active site. The region spanning 157–226 (DAKSTLQELT…AGLALELLEG (70 aa)) is the DRBM domain.

Belongs to the ribonuclease III family. As to quaternary structure, homodimer. Mg(2+) serves as cofactor.

The protein localises to the cytoplasm. The catalysed reaction is Endonucleolytic cleavage to 5'-phosphomonoester.. Its function is as follows. Digests double-stranded RNA. Involved in the processing of primary rRNA transcript to yield the immediate precursors to the large and small rRNAs (23S and 16S). Processes some mRNAs, and tRNAs when they are encoded in the rRNA operon. Processes pre-crRNA and tracrRNA of type II CRISPR loci if present in the organism. The protein is Ribonuclease 3 of Oleidesulfovibrio alaskensis (strain ATCC BAA-1058 / DSM 17464 / G20) (Desulfovibrio alaskensis).